The following is a 257-amino-acid chain: S-methyl-5'-thioadenosine phosphorylase (257 aa).

Phosphate-binding positions include Ser-10, 50 to 51, and 83 to 84; these read RH and TA. Residue Met-180 participates in substrate binding. Thr-181 lines the phosphate pocket. 204–206 is a substrate binding site; it reads DYD.

The protein belongs to the PNP/MTAP phosphorylase family. MTAP subfamily. As to quaternary structure, homohexamer. Dimer of a homotrimer.

The catalysed reaction is S-methyl-5'-thioadenosine + phosphate = 5-(methylsulfanyl)-alpha-D-ribose 1-phosphate + adenine. The enzyme catalyses adenosine + phosphate = alpha-D-ribose 1-phosphate + adenine. The protein operates within amino-acid biosynthesis; L-methionine biosynthesis via salvage pathway; S-methyl-5-thio-alpha-D-ribose 1-phosphate from S-methyl-5'-thioadenosine (phosphorylase route): step 1/1. Functionally, catalyzes the reversible phosphorylation of S-methyl-5'-thioadenosine (MTA) to adenine and 5-methylthioribose-1-phosphate. Involved in the breakdown of MTA, a major by-product of polyamine biosynthesis. Responsible for the first step in the methionine salvage pathway after MTA has been generated from S-adenosylmethionine. Has broad substrate specificity with 6-aminopurine nucleosides as preferred substrates. Can also use adenosine as substrate to form ribose 1-phosphate. This is S-methyl-5'-thioadenosine phosphorylase from Thermococcus kodakarensis (strain ATCC BAA-918 / JCM 12380 / KOD1) (Pyrococcus kodakaraensis (strain KOD1)).